The following is a 402-amino-acid chain: Putative cytochrome P450 123 (402 aa).

Residue Cys350 participates in heme binding.

This sequence belongs to the cytochrome P450 family. Heme is required as a cofactor.

The protein is Putative cytochrome P450 123 (cyp123) of Mycobacterium bovis (strain ATCC BAA-935 / AF2122/97).